The primary structure comprises 143 residues: MAIYGIGTDLAQVSRIAAVLERTGGRFAEKVLGPDELRVFHARRARSEARGIAFLATRFSAKEAFSKAIGLGMHWPMTWRALQTLNRPSGEPYVIASGELAAWLDARGITARVTVSDERDYAVTFVVAEAPDDVAAARSGAAS.

Mg(2+) contacts are provided by aspartate 9 and glutamate 63.

The protein belongs to the P-Pant transferase superfamily. AcpS family. Mg(2+) is required as a cofactor.

It localises to the cytoplasm. The catalysed reaction is apo-[ACP] + CoA = holo-[ACP] + adenosine 3',5'-bisphosphate + H(+). Transfers the 4'-phosphopantetheine moiety from coenzyme A to a Ser of acyl-carrier-protein. This chain is Holo-[acyl-carrier-protein] synthase, found in Burkholderia pseudomallei (strain 668).